The following is a 100-amino-acid chain: Urease subunit gamma (100 aa).

The protein belongs to the urease gamma subunit family. Heterotrimer of UreA (gamma), UreB (beta) and UreC (alpha) subunits. Three heterotrimers associate to form the active enzyme.

The protein resides in the cytoplasm. The catalysed reaction is urea + 2 H2O + H(+) = hydrogencarbonate + 2 NH4(+). It participates in nitrogen metabolism; urea degradation; CO(2) and NH(3) from urea (urease route): step 1/1. This chain is Urease subunit gamma, found in Mycobacterium ulcerans (strain Agy99).